A 314-amino-acid polypeptide reads, in one-letter code: Olfactory receptor 1E2 (314 aa).

At 1–25 (MMGQNQTSISDFLLLGLPIQPEQQN) the chain is on the extracellular side. Asn5 is a glycosylation site (N-linked (GlcNAc...) asparagine). Residues 26 to 49 (LCYALFLAMYLTTLLGNLLIIVLI) form a helical membrane-spanning segment. Residues 50–57 (RLDSHLHT) lie on the Cytoplasmic side of the membrane. A helical membrane pass occupies residues 58–79 (PMYLFLSNLSFSDLCFSSVTIP). The Extracellular segment spans residues 80–100 (KLLQNMQNQDPSIPYADCLTQ). Cys97 and Cys189 are disulfide-bonded. Residues 101–120 (MYFFLLFGDLESFLLVAMAY) traverse the membrane as a helical segment. Residues 121 to 139 (DRYVAICFPLHYTAIMSPM) lie on the Cytoplasmic side of the membrane. A helical membrane pass occupies residues 140-158 (LCLSLVALSWVLTTFHAML). The Extracellular segment spans residues 159 to 195 (HTLLMARLCFCADNVIPHFFCDMSALLKLACSDTRVN). Residues 196–219 (EWVIFIMGGLIVVIPFLLILGSYA) form a helical membrane-spanning segment. The Cytoplasmic portion of the chain corresponds to 220-236 (RIVSSILKVPSSKGICK). Residues 237 to 259 (AFSTCGSHLSVVSLFYGTIIGLY) traverse the membrane as a helical segment. Residues 260–272 (LCPSANSSTLKET) lie on the Extracellular side of the membrane. Asn265 carries an N-linked (GlcNAc...) asparagine glycan. A helical membrane pass occupies residues 273–292 (VMAMMYTVVTPMLNPFIYSL). The Cytoplasmic segment spans residues 293-314 (RNRDMKGALERVICKRKNPFLL).

The protein belongs to the G-protein coupled receptor 1 family.

Its subcellular location is the cell membrane. Functionally, odorant receptor. The sequence is that of Olfactory receptor 1E2 (OR1E2) from Gorilla gorilla gorilla (Western lowland gorilla).